A 591-amino-acid chain; its full sequence is Coiled-coil domain-containing protein 148 (591 aa).

Coiled coils occupy residues 166–195, 352–417, and 466–498; these read VKKQ…SIKI, MLAK…KKKK, and ERRL…KQVA.

This Homo sapiens (Human) protein is Coiled-coil domain-containing protein 148 (CCDC148).